A 225-amino-acid polypeptide reads, in one-letter code: N-(5'-phosphoribosyl)anthranilate isomerase (225 aa).

Belongs to the TrpF family.

The catalysed reaction is N-(5-phospho-beta-D-ribosyl)anthranilate = 1-(2-carboxyphenylamino)-1-deoxy-D-ribulose 5-phosphate. It participates in amino-acid biosynthesis; L-tryptophan biosynthesis; L-tryptophan from chorismate: step 3/5. The chain is N-(5'-phosphoribosyl)anthranilate isomerase from Nitrobacter winogradskyi (strain ATCC 25391 / DSM 10237 / CIP 104748 / NCIMB 11846 / Nb-255).